Consider the following 214-residue polypeptide: Adenylate kinase (214 aa).

10 to 15 (GAGKGT) serves as a coordination point for ATP. Residues 30–59 (STGDMLRAAVKAGTELGKQAKEIMDAGKLV) are NMP. AMP contacts are provided by residues Thr31, Arg36, 57–59 (KLV), 85–88 (GFPR), and Gln92. The interval 122-159 (GRRVHAASGRVYHVKFNPPKVEDKDDVTGEDLSVRKDD) is LID. ATP is bound by residues Arg123 and 132–133 (VY). 2 residues coordinate AMP: Arg156 and Arg167. Arg200 is a binding site for ATP.

The protein belongs to the adenylate kinase family. As to quaternary structure, monomer.

It is found in the cytoplasm. The enzyme catalyses AMP + ATP = 2 ADP. It functions in the pathway purine metabolism; AMP biosynthesis via salvage pathway; AMP from ADP: step 1/1. Its function is as follows. Catalyzes the reversible transfer of the terminal phosphate group between ATP and AMP. Plays an important role in cellular energy homeostasis and in adenine nucleotide metabolism. This Pectobacterium atrosepticum (strain SCRI 1043 / ATCC BAA-672) (Erwinia carotovora subsp. atroseptica) protein is Adenylate kinase.